Here is an 89-residue protein sequence, read N- to C-terminus: LYR motif-containing protein 4 (89 aa).

It belongs to the complex I LYR family.

The protein resides in the mitochondrion. It localises to the nucleus. It participates in cofactor biosynthesis; iron-sulfur cluster biosynthesis. Required for nuclear and mitochondrial iron-sulfur protein biosynthesis. In Xenopus laevis (African clawed frog), this protein is LYR motif-containing protein 4 (lyrm4).